A 393-amino-acid polypeptide reads, in one-letter code: CAI-1 autoinducer synthase (393 aa).

Position 240 is an N6-(pyridoxal phosphate)lysine (lysine 240).

This sequence belongs to the class-II pyridoxal-phosphate-dependent aminotransferase family. It depends on pyridoxal 5'-phosphate as a cofactor.

Its function is as follows. Required for the synthesis of the quorum-sensing autoinducer CAI-1 ((S)-3-hydroxytridecan-4-one) which probably functions as an intragenus signal. This Vibrio campbellii (strain ATCC BAA-1116) protein is CAI-1 autoinducer synthase (cqsA).